The sequence spans 4882 residues: Dual E2 ubiquitin-conjugating enzyme/E3 ubiquitin-protein ligase BIRC6 (4882 aa).

WD repeat units follow at residues Asp-71 to Ala-109 and Leu-110 to Cys-139. A BIR repeat occupies Arg-292–Lys-362. The Zn(2+) site is built by Cys-331, Cys-334, His-351, and Cys-358. Residues Leu-382–Ile-429 form a WD 3 repeat. Disordered stretches follow at residues Asp-468–Glu-502, Gly-542–Glu-561, and Ala-582–Asn-622. Residues Asp-475 to Ser-485 are compositionally biased toward acidic residues. A phosphoserine mark is found at Ser-476, Ser-483, and Ser-485. 4 WD repeats span residues Met-504–Leu-723, Thr-733–Lys-854, Asp-855–Glu-931, and Pro-932–Ile-970. The span at Lys-551–Glu-561 shows a compositional bias: basic and acidic residues. Residues Ala-582 to His-591 show a composition bias toward polar residues. 2 positions are modified to phosphoserine: Ser-584 and Ser-593. Polar residues predominate over residues Ser-598–Asn-622. The tract at residues Gln-1057 to His-1077 is disordered. Over residues Arg-1060–Gln-1069 the composition is skewed to basic residues. Phosphothreonine is present on Thr-1724. Phosphoserine is present on residues Ser-2245 and Ser-2978. The interval Val-2969–Gly-2998 is disordered. Residues His-3212–Arg-3216 are HRRAR loop; important for DIABLO/SMAC and HTRA2 binding. A Ubiquitin-like domain is found at Asp-3842–Gln-4092. Disordered stretches follow at residues Ser-3908–Ala-3927 and Leu-3943–Ala-3973. Thr-3954 is subject to Phosphothreonine. The residue at position 4047 (Ser-4047) is a Phosphoserine. Residues Val-4285–Thr-4304 are disordered. Residues Pro-4286 to Thr-4304 are compositionally biased toward polar residues. The region spanning Ala-4598–Met-4765 is the UBC core domain. Cys-4691 functions as the Glycyl thioester intermediate in the catalytic mechanism. Positions Ala-4857 to Leu-4882 are disordered. A compositionally biased stretch (polar residues) spans Asn-4869–Leu-4882.

This sequence belongs to the BIRC6 family. As to quaternary structure, homodimer; antiparallel. Interacts with DIABLO/SMAC, likely with higher affinity to SMAC dimer than SMAC monomer; this interaction blocks the substrate-binding site and inhibits the caspase inhibition activity of BIRC6. Interacts with RNF41, KIF23/MKLP1, USP8/UBPY, BIRC5/survivin, MAP2K1/MEK1, RAB8A/RAB8, RAB11A/RAB11, PLK1, EXOC3/SEC6 and EXOC4/SEC8. In terms of processing, ubiquitinated. Ubiquitination is mediated by RNF41 E3 ligase and leads to proteasomal degradation, impairing inhibition of apoptosis. Deubiquitinated by USP8/UBPY. Autoubiquitinated; mediated by E1 ubiquitin activating enzyme UBA6. Proteolytically cleaved. Acts as substrate for CASP3, CASP6, CASP7, CASP9 and HTRA2. Widely expressed. Highly expressed in the brain and kidney.

Its subcellular location is the golgi apparatus. It is found in the trans-Golgi network membrane. The protein localises to the endosome. It localises to the cytoplasm. The protein resides in the cytoskeleton. Its subcellular location is the spindle pole. It is found in the microtubule organizing center. The protein localises to the centrosome. It localises to the midbody. The protein resides in the midbody ring. It catalyses the reaction S-ubiquitinyl-[E1 ubiquitin-activating enzyme]-L-cysteine + [acceptor protein]-L-lysine = [E1 ubiquitin-activating enzyme]-L-cysteine + N(6)-monoubiquitinyl-[acceptor protein]-L-lysine.. With respect to regulation, inhibited by DIABLO/SMAC, which competes for the substrate-binding sites on BIRC6. BIRC6 inhibits caspases and protease by ubiquitination but BIRC6 itself is subjected to protease cleavage by CASP3, CASP6, CASP7, CASP9 and HTRA2 by protease cleavage. Its function is as follows. Anti-apoptotic protein known as inhibitor of apoptosis (IAP) which can regulate cell death by controlling caspases and by acting as an E3 ubiquitin-protein ligase. Unlike most IAPs, does not contain a RING domain and it is not a RING-type E3 ligase. Instead acts as a dual E2/E3 enzyme that combines ubiquitin conjugating (E2) and ubiquitin ligase (E3) activities in a single polypeptide. Ubiquitination is mediated by a non-canonical E1 ubiquitin activating enzyme UBA6. Ubiquitinates CASP3, CASP7 and CASP9 and inhibits their caspase activity; also ubiquitinates their procaspases but to a weaker extent. Ubiquitinates pro-apoptotic factors DIABLO/SMAC and HTRA2. DIABLO/SMAC antagonizes the caspase inhibition activity of BIRC6 by competing for the same binding sites as the caspases. Ubiquitinates the autophagy protein MAP1LC3B; this activity is also inhibited by DIABLO/SMAC. Important regulator for the final stages of cytokinesis. Crucial for normal vesicle targeting to the site of abscission, but also for the integrity of the midbody and the midbody ring, and its striking ubiquitin modification. Required for normal placenta development. This chain is Dual E2 ubiquitin-conjugating enzyme/E3 ubiquitin-protein ligase BIRC6 (Birc6), found in Mus musculus (Mouse).